The sequence spans 327 residues: Methionyl-tRNA formyltransferase (327 aa).

121-124 (SLLP) lines the (6S)-5,6,7,8-tetrahydrofolate pocket.

It belongs to the Fmt family.

It carries out the reaction L-methionyl-tRNA(fMet) + (6R)-10-formyltetrahydrofolate = N-formyl-L-methionyl-tRNA(fMet) + (6S)-5,6,7,8-tetrahydrofolate + H(+). In terms of biological role, attaches a formyl group to the free amino group of methionyl-tRNA(fMet). The formyl group appears to play a dual role in the initiator identity of N-formylmethionyl-tRNA by promoting its recognition by IF2 and preventing the misappropriation of this tRNA by the elongation apparatus. The polypeptide is Methionyl-tRNA formyltransferase (Burkholderia pseudomallei (strain K96243)).